We begin with the raw amino-acid sequence, 135 residues long: Mu-like prophage FluMu protein gp46 (135 aa).

The protein to phage Mu protein gp46.

This is Mu-like prophage FluMu protein gp46 from Haemophilus influenzae (strain ATCC 51907 / DSM 11121 / KW20 / Rd).